The sequence spans 1228 residues: DNA-directed RNA polymerase subunit beta'' (1228 aa).

Cysteine 222, cysteine 296, cysteine 303, and cysteine 306 together coordinate Zn(2+).

The protein belongs to the RNA polymerase beta' chain family. RpoC2 subfamily. In terms of assembly, in plastids the minimal PEP RNA polymerase catalytic core is composed of four subunits: alpha, beta, beta', and beta''. When a (nuclear-encoded) sigma factor is associated with the core the holoenzyme is formed, which can initiate transcription. It depends on Zn(2+) as a cofactor.

The protein localises to the plastid. Its subcellular location is the chloroplast. The enzyme catalyses RNA(n) + a ribonucleoside 5'-triphosphate = RNA(n+1) + diphosphate. Its function is as follows. DNA-dependent RNA polymerase catalyzes the transcription of DNA into RNA using the four ribonucleoside triphosphates as substrates. The protein is DNA-directed RNA polymerase subunit beta'' of Gracilaria tenuistipitata var. liui (Red alga).